The primary structure comprises 515 residues: Gap junction alpha-9 protein (515 aa).

At 1–19 (MGDWNLLGDTLEEVHIHST) the chain is on the cytoplasmic side. The helical transmembrane segment at 20-40 (MIGKIWLTILFIFRMLVLGVA) threads the bilayer. The Extracellular segment spans residues 41–77 (AEDVWNDEQSGFICNTEQPGCRNVCYDQAFPISLIRY). The helical transmembrane segment at 78–98 (WVLQVIFVSSPSLVYMGHALY) threads the bilayer. At 99 to 166 (RLRVLEEERQ…YVIHIFTRSV (68 aa)) the chain is on the cytoplasmic side. Residues 167-187 (VEVGFMIGQYLLYGFHLEPLF) form a helical membrane-spanning segment. Residues 188–209 (KCHGHPCPNIIDCFVSRPTEKT) are Extracellular-facing. A helical membrane pass occupies residues 210-230 (IFLLFMQSIATISLFLNILEI). At 231-515 (FHLGFKKIKR…GRRVPTDLQI (285 aa)) the chain is on the cytoplasmic side. Basic and acidic residues predominate over residues 370 to 380 (KRETEGKDSKR). Disordered regions lie at residues 370–400 (KRET…GENN) and 428–472 (SSTE…NTAD). The segment covering 456–472 (PPSQGDSQSLDIPNTAD) has biased composition (polar residues).

Belongs to the connexin family. Alpha-type (group II) subfamily. In terms of assembly, a connexon is composed of a hexamer of connexins. Highly abundant in skeletal muscle. Also detected in testis.

The protein resides in the cell membrane. Its subcellular location is the cell junction. It localises to the gap junction. One gap junction consists of a cluster of closely packed pairs of transmembrane channels, the connexons, through which materials of low MW diffuse from one cell to a neighboring cell. The chain is Gap junction alpha-9 protein (GJA9) from Homo sapiens (Human).